A 60-amino-acid polypeptide reads, in one-letter code: Large ribosomal subunit protein bL32 (60 aa).

The segment covering Met1–His20 has biased composition (basic residues). The tract at residues Met1 to Asp60 is disordered.

This sequence belongs to the bacterial ribosomal protein bL32 family.

The chain is Large ribosomal subunit protein bL32 from Psychrobacter sp. (strain PRwf-1).